Reading from the N-terminus, the 192-residue chain is GTP cyclohydrolase-2 (192 aa).

47-51 (RIHSE) is a binding site for GTP. 3 residues coordinate Zn(2+): Cys-52, Cys-63, and Cys-65. GTP contacts are provided by residues Gln-68, 90-92 (EGR), and Thr-112. Asp-124 (proton acceptor) is an active-site residue. Arg-126 (nucleophile) is an active-site residue. Positions 147 and 152 each coordinate GTP.

Belongs to the GTP cyclohydrolase II family. It depends on Zn(2+) as a cofactor.

The catalysed reaction is GTP + 4 H2O = 2,5-diamino-6-hydroxy-4-(5-phosphoribosylamino)-pyrimidine + formate + 2 phosphate + 3 H(+). Its pathway is cofactor biosynthesis; riboflavin biosynthesis; 5-amino-6-(D-ribitylamino)uracil from GTP: step 1/4. Functionally, catalyzes the conversion of GTP to 2,5-diamino-6-ribosylamino-4(3H)-pyrimidinone 5'-phosphate (DARP), formate and pyrophosphate. This chain is GTP cyclohydrolase-2, found in Picrophilus torridus (strain ATCC 700027 / DSM 9790 / JCM 10055 / NBRC 100828 / KAW 2/3).